The primary structure comprises 953 residues: Translation initiation factor IF-2 (953 aa).

The disordered stretch occupies residues 53 to 368 (AKKAVAGTSE…PVTERKFHEL (316 aa)). 2 stretches are compositionally biased toward basic and acidic residues: residues 135-151 (FKAE…ERRK) and 162-190 (RNDR…RNRQ). The span at 191 to 214 (EQGNQHRNQGQSQYNQQRQSFNQG) shows a compositional bias: low complexity. Over residues 236-266 (RSSEERFKQAKANKEALREQNKRKEQAKLED) the composition is skewed to basic and acidic residues. The span at 274-288 (PKPTAKAPATPAPTA) shows a compositional bias: low complexity. Positions 301 to 318 (ARPDKERDNFDHEEDGPR) are enriched in basic and acidic residues. The segment covering 332–341 (NQKNSNWNNN) has biased composition (low complexity). Residues 455–622 (ERPPVVTIMG…TVLLVAEIQE (168 aa)) enclose the tr-type G domain. The tract at residues 464–471 (GHVDHGKT) is G1. 464–471 (GHVDHGKT) contacts GTP. The interval 489 to 493 (GITQH) is G2. Residues 510–513 (DTPG) are G3. GTP contacts are provided by residues 510–514 (DTPGH) and 564–567 (NKID). Residues 564–567 (NKID) are G4. The G5 stretch occupies residues 600 to 602 (SAK).

It belongs to the TRAFAC class translation factor GTPase superfamily. Classic translation factor GTPase family. IF-2 subfamily.

It localises to the cytoplasm. In terms of biological role, one of the essential components for the initiation of protein synthesis. Protects formylmethionyl-tRNA from spontaneous hydrolysis and promotes its binding to the 30S ribosomal subunits. Also involved in the hydrolysis of GTP during the formation of the 70S ribosomal complex. The chain is Translation initiation factor IF-2 from Streptococcus gordonii (strain Challis / ATCC 35105 / BCRC 15272 / CH1 / DL1 / V288).